The primary structure comprises 472 residues: Siroheme synthase (472 aa).

Residues 1–207 form a precorrin-2 dehydrogenase /sirohydrochlorin ferrochelatase region; it reads MNFLPIFLDI…GKDQAAKAWL (207 aa). Residues 22–23 and 43–44 each bind NAD(+); these read EV and PR. Serine 132 is subject to Phosphoserine. The tract at residues 221 to 472 is uroporphyrinogen-III C-methyltransferase; the sequence is GEVYLVGAGP…QPEGNLPGAE (252 aa). Position 230 (proline 230) interacts with S-adenosyl-L-methionine. The Proton acceptor role is filled by aspartate 253. The active-site Proton donor is lysine 275. S-adenosyl-L-methionine is bound by residues 306 to 308, isoleucine 311, 336 to 337, methionine 388, and glycine 417; these read GGD and TA.

It in the N-terminal section; belongs to the precorrin-2 dehydrogenase / sirohydrochlorin ferrochelatase family. This sequence in the C-terminal section; belongs to the precorrin methyltransferase family.

The catalysed reaction is uroporphyrinogen III + 2 S-adenosyl-L-methionine = precorrin-2 + 2 S-adenosyl-L-homocysteine + H(+). It catalyses the reaction precorrin-2 + NAD(+) = sirohydrochlorin + NADH + 2 H(+). The enzyme catalyses siroheme + 2 H(+) = sirohydrochlorin + Fe(2+). Its pathway is cofactor biosynthesis; adenosylcobalamin biosynthesis; precorrin-2 from uroporphyrinogen III: step 1/1. It participates in cofactor biosynthesis; adenosylcobalamin biosynthesis; sirohydrochlorin from precorrin-2: step 1/1. It functions in the pathway porphyrin-containing compound metabolism; siroheme biosynthesis; precorrin-2 from uroporphyrinogen III: step 1/1. The protein operates within porphyrin-containing compound metabolism; siroheme biosynthesis; siroheme from sirohydrochlorin: step 1/1. Its pathway is porphyrin-containing compound metabolism; siroheme biosynthesis; sirohydrochlorin from precorrin-2: step 1/1. Multifunctional enzyme that catalyzes the SAM-dependent methylations of uroporphyrinogen III at position C-2 and C-7 to form precorrin-2 via precorrin-1. Then it catalyzes the NAD-dependent ring dehydrogenation of precorrin-2 to yield sirohydrochlorin. Finally, it catalyzes the ferrochelation of sirohydrochlorin to yield siroheme. The protein is Siroheme synthase of Nitrosospira multiformis (strain ATCC 25196 / NCIMB 11849 / C 71).